We begin with the raw amino-acid sequence, 147 residues long: UPF0310 protein in gntR 5'region (147 aa).

The protein belongs to the UPF0310 family.

The sequence is that of UPF0310 protein in gntR 5'region (oug) from Bacillus licheniformis.